The chain runs to 341 residues: N-acetyl-gamma-glutamyl-phosphate reductase (341 aa).

The active site involves cysteine 146.

The protein belongs to the NAGSA dehydrogenase family. Type 1 subfamily.

It localises to the cytoplasm. It carries out the reaction N-acetyl-L-glutamate 5-semialdehyde + phosphate + NADP(+) = N-acetyl-L-glutamyl 5-phosphate + NADPH + H(+). It functions in the pathway amino-acid biosynthesis; L-arginine biosynthesis; N(2)-acetyl-L-ornithine from L-glutamate: step 3/4. Its function is as follows. Catalyzes the NADPH-dependent reduction of N-acetyl-5-glutamyl phosphate to yield N-acetyl-L-glutamate 5-semialdehyde. The sequence is that of N-acetyl-gamma-glutamyl-phosphate reductase from Limosilactobacillus fermentum (strain NBRC 3956 / LMG 18251) (Lactobacillus fermentum).